The chain runs to 576 residues: Small ribosomal subunit protein mS80 (rPPR6) (576 aa).

The transit peptide at 1 to 76 directs the protein to the mitochondrion; that stretch reads MLRSFLCRSQ…SLPADEIPIS (76 aa). 9 PPR repeats span residues 230–264, 265–299, 300–336, 341–370, 371–405, 406–440, 441–475, 476–510, and 511–546; these read NLEILNELIALFGKLGKSKAAFDVFSKTEEFGFTP, NAKTYYLTLEALCKRSFMDWACSVCEKMLKSGVLS, EGEQMGNIITWFCKEGKAEEAYSVYELAKTKEKSLPP, TLITALCKNDGTITFAQEMLGDLSGEARRR, GIKPFSDVIHSLCRMRNVKDAKALLLDMISKGPAP, GNAVFNLVVHACSKTGDLDEAKEVLKLMESRGLKP, DVYTYTVIISGYAKGGMMDEAQEILAEAKKKHKKL, SPVTYHALIRGYCKIEEYDEALKLLNEMDRFGVQP, and NADEYNKLIQSFCLKALDWEKAEVLFEEMKQKGLHL.

This sequence belongs to the PPR family. P subfamily. Component of the mitochondrial ribosome small subunit.

It is found in the mitochondrion. This chain is Small ribosomal subunit protein mS80 (rPPR6), found in Arabidopsis thaliana (Mouse-ear cress).